The following is a 121-amino-acid chain: MIAVIGLLLGFLVSALFLIQGKRRRTNDNQEKKRSSSEPVEDVVRPKSYSKSEVAVHNKRNDCWIIIKDKVYDITSYVEEHPGGDAILDHAGDDSTDGFFGPQHATRVFDMIEDFYIGELH.

The chain crosses the membrane as a helical span at residues 1–21 (MIAVIGLLLGFLVSALFLIQG). A disordered region spans residues 24 to 49 (RRTNDNQEKKRSSSEPVEDVVRPKSY). Basic and acidic residues predominate over residues 26–36 (TNDNQEKKRSS). Residues 46-121 (PKSYSKSEVA…IEDFYIGELH (76 aa)) form the Cytochrome b5 heme-binding domain. Heme is bound by residues His-81 and His-104.

The protein belongs to the cytochrome b5 family.

It is found in the membrane. This Arabidopsis thaliana (Mouse-ear cress) protein is Cytochrome B5-like protein.